The sequence spans 288 residues: Bifunctional protein FolD (288 aa).

Residues 168 to 170 (GRG), T195, and V236 contribute to the NADP(+) site.

The protein belongs to the tetrahydrofolate dehydrogenase/cyclohydrolase family. Homodimer.

It catalyses the reaction (6R)-5,10-methylene-5,6,7,8-tetrahydrofolate + NADP(+) = (6R)-5,10-methenyltetrahydrofolate + NADPH. The enzyme catalyses (6R)-5,10-methenyltetrahydrofolate + H2O = (6R)-10-formyltetrahydrofolate + H(+). Its pathway is one-carbon metabolism; tetrahydrofolate interconversion. Catalyzes the oxidation of 5,10-methylenetetrahydrofolate to 5,10-methenyltetrahydrofolate and then the hydrolysis of 5,10-methenyltetrahydrofolate to 10-formyltetrahydrofolate. This is Bifunctional protein FolD from Mycobacterium sp. (strain JLS).